Here is a 593-residue protein sequence, read N- to C-terminus: Tyrosine-protein phosphatase non-receptor type 11 (593 aa).

SH2 domains follow at residues tryptophan 6–leucine 102 and tryptophan 112–leucine 216. Positions phenylalanine 247–tyrosine 521 constitute a Tyrosine-protein phosphatase domain. Substrate is bound by residues aspartate 425, cysteine 459 to arginine 465, and glutamine 506. Cysteine 459 (phosphocysteine intermediate) is an active-site residue. The segment covering serine 548–glutamine 557 has biased composition (polar residues). A disordered region spans residues serine 548–aspartate 575. Positions proline 559–threonine 568 are enriched in pro residues.

It belongs to the protein-tyrosine phosphatase family. Non-receptor class 2 subfamily. Post-translationally, phosphorylated by tyrosine-protein kinases. Expressed in embryonic fibroblast, hematopoietic, erythroid, myeloid and lymphoid cells.

The protein localises to the cytoplasm. It carries out the reaction O-phospho-L-tyrosyl-[protein] + H2O = L-tyrosyl-[protein] + phosphate. In terms of biological role, this PTPase activity may directly link growth factor receptors and other signaling proteins through protein-tyrosine phosphorylation. The SH2 regions may interact with other cellular components to modulate its own phosphatase activity against interacting substrates. May play a positive role during the stages of erythroid cell proliferation. The protein is Tyrosine-protein phosphatase non-receptor type 11 (PTPN11) of Gallus gallus (Chicken).